A 188-amino-acid polypeptide reads, in one-letter code: dCTP deaminase (188 aa).

DCTP is bound by residues 111–116 (KSTYAR), 135–137 (TLE), Q156, Y170, K179, and Q180. E137 (proton donor/acceptor) is an active-site residue.

This sequence belongs to the dCTP deaminase family. As to quaternary structure, homotrimer.

The enzyme catalyses dCTP + H2O + H(+) = dUTP + NH4(+). It functions in the pathway pyrimidine metabolism; dUMP biosynthesis; dUMP from dCTP (dUTP route): step 1/2. Its function is as follows. Catalyzes the deamination of dCTP to dUTP. The chain is dCTP deaminase from Rickettsia bellii (strain OSU 85-389).